Consider the following 298-residue polypeptide: Acetyl-coenzyme A carboxylase carboxyl transferase subunit beta (298 aa).

A disordered region spans residues 1 to 21 (MNQEVKSGKVLSPSTPWTQRP). The C4-type zinc-finger motif lies at 20–67 (RPVPGIEVADEQQTLKATFTEPTIECPECHALVTRTAISFNAYVCPQC). Positions 41–298 (PTIECPECHA…RLVSKLMNLP (258 aa)) constitute a CoA carboxyltransferase N-terminal domain. 4 residues coordinate Zn(2+): cysteine 45, cysteine 48, cysteine 64, and cysteine 67.

The protein belongs to the AccD/PCCB family. In terms of assembly, acetyl-CoA carboxylase is a heterohexamer composed of biotin carboxyl carrier protein (AccB), biotin carboxylase (AccC) and two subunits each of ACCase subunit alpha (AccA) and ACCase subunit beta (AccD). Requires Zn(2+) as cofactor.

It localises to the cytoplasm. It catalyses the reaction N(6)-carboxybiotinyl-L-lysyl-[protein] + acetyl-CoA = N(6)-biotinyl-L-lysyl-[protein] + malonyl-CoA. The protein operates within lipid metabolism; malonyl-CoA biosynthesis; malonyl-CoA from acetyl-CoA: step 1/1. Component of the acetyl coenzyme A carboxylase (ACC) complex. Biotin carboxylase (BC) catalyzes the carboxylation of biotin on its carrier protein (BCCP) and then the CO(2) group is transferred by the transcarboxylase to acetyl-CoA to form malonyl-CoA. The chain is Acetyl-coenzyme A carboxylase carboxyl transferase subunit beta from Acinetobacter baumannii (strain SDF).